Reading from the N-terminus, the 154-residue chain is Myoglobin (154 aa).

Residues 2–148 (GLSDGEWQIV…FRNDIAAKYK (147 aa)) enclose the Globin domain. S4 carries the phosphoserine modification. A nitrite-binding site is contributed by H65. O2 is bound at residue H65. Residue T68 is modified to Phosphothreonine. H94 serves as a coordination point for heme b.

The protein belongs to the globin family. As to quaternary structure, monomeric.

The protein localises to the cytoplasm. The protein resides in the sarcoplasm. It carries out the reaction Fe(III)-heme b-[protein] + nitric oxide + H2O = Fe(II)-heme b-[protein] + nitrite + 2 H(+). It catalyses the reaction H2O2 + AH2 = A + 2 H2O. Functionally, monomeric heme protein which primary function is to store oxygen and facilitate its diffusion within muscle tissues. Reversibly binds oxygen through a pentacoordinated heme iron and enables its timely and efficient release as needed during periods of heightened demand. Depending on the oxidative conditions of tissues and cells, and in addition to its ability to bind oxygen, it also has a nitrite reductase activity whereby it regulates the production of bioactive nitric oxide. Under stress conditions, like hypoxia and anoxia, it also protects cells against reactive oxygen species thanks to its pseudoperoxidase activity. The polypeptide is Myoglobin (MB) (Canis lupus familiaris (Dog)).